A 561-amino-acid polypeptide reads, in one-letter code: Putative transport protein YbjL (561 aa).

5 consecutive transmembrane segments (helical) span residues 8 to 28, 32 to 52, 66 to 86, 94 to 114, and 158 to 178; these read LLNG…LCLG, LGSI…LLGQ, FMLF…SIFF, MLAL…GKLF, and NLSL…IVGA. RCK C-terminal domains lie at 200–288 and 292–373; these read RGLD…SFRN and VFDR…RIGF. A run of 6 helical transmembrane segments spans residues 383 to 403, 406 to 426, 451 to 471, 475 to 495, 503 to 523, and 540 to 560; these read LLAF…TFQF, FSFG…LGFM, VFMA…LGAI, MLIA…LFGA, ALLF…EIIS, and AIAN…CPGL.

The protein belongs to the AAE transporter (TC 2.A.81) family. YbjL subfamily.

Its subcellular location is the cell membrane. The sequence is that of Putative transport protein YbjL from Shigella dysenteriae serotype 1 (strain Sd197).